Here is a 78-residue protein sequence, read N- to C-terminus: UPF0349 protein BLi03401/BL03152 (78 aa).

It belongs to the UPF0349 family.

In Bacillus licheniformis (strain ATCC 14580 / DSM 13 / JCM 2505 / CCUG 7422 / NBRC 12200 / NCIMB 9375 / NCTC 10341 / NRRL NRS-1264 / Gibson 46), this protein is UPF0349 protein BLi03401/BL03152.